Reading from the N-terminus, the 349-residue chain is tRNA pseudouridine synthase D (349 aa).

Phe27 lines the substrate pocket. Residue Asp80 is the Nucleophile of the active site. Asn129 is a binding site for substrate. One can recognise a TRUD domain in the interval 155-303 (GVPNYFGAQR…VEAARRAMLL (149 aa)). Position 329 (Phe329) interacts with substrate.

The protein belongs to the pseudouridine synthase TruD family.

It catalyses the reaction uridine(13) in tRNA = pseudouridine(13) in tRNA. In terms of biological role, responsible for synthesis of pseudouridine from uracil-13 in transfer RNAs. This chain is tRNA pseudouridine synthase D, found in Shigella sonnei (strain Ss046).